Consider the following 252-residue polypeptide: Hydroxyacylglutathione hydrolase (252 aa).

Histidine 54, histidine 56, aspartate 58, histidine 59, histidine 111, aspartate 128, and histidine 166 together coordinate Zn(2+).

It belongs to the metallo-beta-lactamase superfamily. Glyoxalase II family. As to quaternary structure, monomer. Zn(2+) serves as cofactor.

The enzyme catalyses an S-(2-hydroxyacyl)glutathione + H2O = a 2-hydroxy carboxylate + glutathione + H(+). The protein operates within secondary metabolite metabolism; methylglyoxal degradation; (R)-lactate from methylglyoxal: step 2/2. Its function is as follows. Thiolesterase that catalyzes the hydrolysis of S-D-lactoyl-glutathione to form glutathione and D-lactic acid. The polypeptide is Hydroxyacylglutathione hydrolase (Vibrio cholerae serotype O1 (strain ATCC 39541 / Classical Ogawa 395 / O395)).